The following is a 483-amino-acid chain: Glycogen synthase (483 aa).

K18 contacts ADP-alpha-D-glucose.

Belongs to the glycosyltransferase 1 family. Bacterial/plant glycogen synthase subfamily.

The catalysed reaction is [(1-&gt;4)-alpha-D-glucosyl](n) + ADP-alpha-D-glucose = [(1-&gt;4)-alpha-D-glucosyl](n+1) + ADP + H(+). It participates in glycan biosynthesis; glycogen biosynthesis. Functionally, synthesizes alpha-1,4-glucan chains using ADP-glucose. This is Glycogen synthase from Methylocella silvestris (strain DSM 15510 / CIP 108128 / LMG 27833 / NCIMB 13906 / BL2).